We begin with the raw amino-acid sequence, 122 residues long: Putative ankyrin repeat protein L22 (122 aa).

ANK repeat units follow at residues 3–32, 33–62, 63–92, and 94–122; these read DNNY…DIKA, DDDY…DIRV, NNDY…NIRA, and DDYA…VLNQ.

In Acanthamoeba polyphaga (Amoeba), this protein is Putative ankyrin repeat protein L22.